The primary structure comprises 648 residues: Bifunctional protein TilS/HprT (648 aa).

29-34 (SGGPDS) contributes to the ATP binding site. Position 627 (Asp-627) interacts with Mg(2+).

In the N-terminal section; belongs to the tRNA(Ile)-lysidine synthase family. The protein in the C-terminal section; belongs to the purine/pyrimidine phosphoribosyltransferase family. Mg(2+) serves as cofactor.

The protein resides in the cytoplasm. It carries out the reaction IMP + diphosphate = hypoxanthine + 5-phospho-alpha-D-ribose 1-diphosphate. The catalysed reaction is GMP + diphosphate = guanine + 5-phospho-alpha-D-ribose 1-diphosphate. The enzyme catalyses cytidine(34) in tRNA(Ile2) + L-lysine + ATP = lysidine(34) in tRNA(Ile2) + AMP + diphosphate + H(+). Its function is as follows. Ligates lysine onto the cytidine present at position 34 of the AUA codon-specific tRNA(Ile) that contains the anticodon CAU, in an ATP-dependent manner. Cytidine is converted to lysidine, thus changing the amino acid specificity of the tRNA from methionine to isoleucine. In Listeria monocytogenes serotype 4b (strain F2365), this protein is Bifunctional protein TilS/HprT (tilS/hprT).